A 303-amino-acid chain; its full sequence is Serine/threonine-protein phosphatase 6 catalytic subunit (303 aa).

Residues Asp51, His53, Asp79, and Asn111 each coordinate Mn(2+). His112 (proton donor) is an active-site residue. His161 and His235 together coordinate Mn(2+).

Belongs to the PPP phosphatase family. PP-6 (PP-V) subfamily. Mn(2+) serves as cofactor.

The protein localises to the cytoplasm. It catalyses the reaction O-phospho-L-seryl-[protein] + H2O = L-seryl-[protein] + phosphate. The catalysed reaction is O-phospho-L-threonyl-[protein] + H2O = L-threonyl-[protein] + phosphate. Its function is as follows. May be involved in controlling cellularization or in regulating transcription of the genes involved in this process. This Drosophila melanogaster (Fruit fly) protein is Serine/threonine-protein phosphatase 6 catalytic subunit (PpV).